The sequence spans 225 residues: Ribosomal RNA small subunit methyltransferase G (225 aa).

Residues Gly-84, Phe-89, 107 to 109, 135 to 136, and Arg-154 contribute to the S-adenosyl-L-methionine site; these read DST and AE.

Belongs to the methyltransferase superfamily. RNA methyltransferase RsmG family.

Its subcellular location is the cytoplasm. Functionally, specifically methylates the N7 position of a guanine in 16S rRNA. This is Ribosomal RNA small subunit methyltransferase G from Microcystis aeruginosa (strain NIES-843 / IAM M-2473).